Here is a 547-residue protein sequence, read N- to C-terminus: Cytochrome P450 monooxygenase 81 (547 aa).

2 helical membrane-spanning segments follow: residues 6–23 (IPTQ…LFLL) and 106–124 (AFFA…ATAG). Cys483 provides a ligand contact to heme. N-linked (GlcNAc...) asparagine glycosylation is found at Asn503 and Asn516.

It belongs to the cytochrome P450 family. Heme is required as a cofactor.

The protein resides in the membrane. Its pathway is secondary metabolite biosynthesis. Cytochrome P450 monooxygenase that is able to use dehydroabietic acid as a substrate for oxidation. The protein is Cytochrome P450 monooxygenase 81 of Postia placenta (strain ATCC 44394 / Madison 698-R) (Brown rot fungus).